Reading from the N-terminus, the 665-residue chain is Methionine--tRNA ligase (665 aa).

The 'HIGH' region signature appears at 12-22 (YYPSGKLHIGS). The short motif at 308 to 312 (KMSKS) is the 'KMSKS' region element. Lysine 311 lines the ATP pocket. The tRNA-binding domain maps to 562 to 665 (TFDAVEIRVA…SSVPNGSIIG (104 aa)).

Belongs to the class-I aminoacyl-tRNA synthetase family. MetG type 2B subfamily. Homodimer.

It localises to the cytoplasm. It catalyses the reaction tRNA(Met) + L-methionine + ATP = L-methionyl-tRNA(Met) + AMP + diphosphate. Is required not only for elongation of protein synthesis but also for the initiation of all mRNA translation through initiator tRNA(fMet) aminoacylation. The protein is Methionine--tRNA ligase (metG) of Streptococcus pyogenes serotype M18 (strain MGAS8232).